The following is a 246-amino-acid chain: Small ribosomal subunit protein uS3 (246 aa).

The KH type-2 domain maps to 19-98 (IDEWLAQNFY…NPMLDARVQA (80 aa)). A disordered region spans residues 218–246 (LQEETASTLREHMEAARPGEEHEEDREES). Positions 226-237 (LREHMEAARPGE) are enriched in basic and acidic residues.

The protein belongs to the universal ribosomal protein uS3 family. In terms of assembly, part of the 30S ribosomal subunit.

Its function is as follows. Binds the lower part of the 30S subunit head. The chain is Small ribosomal subunit protein uS3 from Aeropyrum pernix (strain ATCC 700893 / DSM 11879 / JCM 9820 / NBRC 100138 / K1).